Here is a 203-residue protein sequence, read N- to C-terminus: CCG-binding protein 1 (203 aa).

Residues 156 to 178 form a disordered region; that stretch reads IPDGLPKSEQELEEEEKSKMPDS. Positions 161-175 are enriched in basic and acidic residues; that stretch reads PKSEQELEEEEKSKM.

In terms of assembly, homotetramer. Interacts with MEE12/CCG, MED7A, MED7B, MED9, AGL49, AGL53, AGL75, AGL80, AGL81, AGL82, AGL103 and NRPB1 (via CTD). Expressed in roots, leaves, stems and flowers. Expressed in the central cell of mature ovules.

The protein localises to the nucleus. The protein resides in the cytoplasm. Functionally, required for the development of the one-cell zygote and endosperm in embryos. Required for micropylar pollen tube guidance, but has no effect on ovule development and gametophytic cell fate specification. May connect transcription factors and the Pol II machinery to regulate pollen tube attraction, via its interactions with AGAMOUS-like (AGL) transcription factors, MEE14/CCG and the Mediator complex. In Arabidopsis thaliana (Mouse-ear cress), this protein is CCG-binding protein 1.